The sequence spans 315 residues: 4-hydroxy-3-methylbut-2-enyl diphosphate reductase (315 aa).

Residue C12 participates in [4Fe-4S] cluster binding. Residues H43 and H81 each coordinate (2E)-4-hydroxy-3-methylbut-2-enyl diphosphate. Residues H43 and H81 each contribute to the dimethylallyl diphosphate site. Isopentenyl diphosphate is bound by residues H43 and H81. C103 lines the [4Fe-4S] cluster pocket. H131 provides a ligand contact to (2E)-4-hydroxy-3-methylbut-2-enyl diphosphate. H131 serves as a coordination point for dimethylallyl diphosphate. H131 provides a ligand contact to isopentenyl diphosphate. The active-site Proton donor is E133. Residue T172 participates in (2E)-4-hydroxy-3-methylbut-2-enyl diphosphate binding. C200 contributes to the [4Fe-4S] cluster binding site. Positions 228, 230, and 273 each coordinate (2E)-4-hydroxy-3-methylbut-2-enyl diphosphate. Residues S228, N230, and S273 each contribute to the dimethylallyl diphosphate site. 3 residues coordinate isopentenyl diphosphate: S228, N230, and S273.

It belongs to the IspH family. [4Fe-4S] cluster is required as a cofactor.

The catalysed reaction is isopentenyl diphosphate + 2 oxidized [2Fe-2S]-[ferredoxin] + H2O = (2E)-4-hydroxy-3-methylbut-2-enyl diphosphate + 2 reduced [2Fe-2S]-[ferredoxin] + 2 H(+). It catalyses the reaction dimethylallyl diphosphate + 2 oxidized [2Fe-2S]-[ferredoxin] + H2O = (2E)-4-hydroxy-3-methylbut-2-enyl diphosphate + 2 reduced [2Fe-2S]-[ferredoxin] + 2 H(+). Its pathway is isoprenoid biosynthesis; dimethylallyl diphosphate biosynthesis; dimethylallyl diphosphate from (2E)-4-hydroxy-3-methylbutenyl diphosphate: step 1/1. It functions in the pathway isoprenoid biosynthesis; isopentenyl diphosphate biosynthesis via DXP pathway; isopentenyl diphosphate from 1-deoxy-D-xylulose 5-phosphate: step 6/6. Functionally, catalyzes the conversion of 1-hydroxy-2-methyl-2-(E)-butenyl 4-diphosphate (HMBPP) into a mixture of isopentenyl diphosphate (IPP) and dimethylallyl diphosphate (DMAPP). Acts in the terminal step of the DOXP/MEP pathway for isoprenoid precursor biosynthesis. The protein is 4-hydroxy-3-methylbut-2-enyl diphosphate reductase of Exiguobacterium sibiricum (strain DSM 17290 / CCUG 55495 / CIP 109462 / JCM 13490 / 255-15).